The chain runs to 732 residues: Catalase-peroxidase (732 aa).

The tract at residues 1-23 (MSEQSKCPVTGRTAGHPVAGGGM) is disordered. The segment at residues 97–220 (WHSAGTYRTS…LAAVQMGLIY (124 aa)) is a cross-link (tryptophyl-tyrosyl-methioninium (Trp-Tyr) (with M-246)). The Proton acceptor role is filled by H98. Positions 220-246 (YVNPEGPDGNPDPVAAGRDIRETFARM) form a cross-link, tryptophyl-tyrosyl-methioninium (Tyr-Met) (with W-97). H261 contacts heme b.

It belongs to the peroxidase family. Peroxidase/catalase subfamily. As to quaternary structure, homodimer or homotetramer. Heme b is required as a cofactor. Post-translationally, formation of the three residue Trp-Tyr-Met cross-link is important for the catalase, but not the peroxidase activity of the enzyme.

The enzyme catalyses H2O2 + AH2 = A + 2 H2O. The catalysed reaction is 2 H2O2 = O2 + 2 H2O. In terms of biological role, bifunctional enzyme with both catalase and broad-spectrum peroxidase activity. The polypeptide is Catalase-peroxidase (Chlorobium limicola (strain DSM 245 / NBRC 103803 / 6330)).